The chain runs to 232 residues: Ubiquinone biosynthesis O-methyltransferase (232 aa).

4 residues coordinate S-adenosyl-L-methionine: Arg-36, Gly-55, Asp-76, and Leu-120.

It belongs to the methyltransferase superfamily. UbiG/COQ3 family.

The catalysed reaction is a 3-demethylubiquinol + S-adenosyl-L-methionine = a ubiquinol + S-adenosyl-L-homocysteine + H(+). The enzyme catalyses a 3-(all-trans-polyprenyl)benzene-1,2-diol + S-adenosyl-L-methionine = a 2-methoxy-6-(all-trans-polyprenyl)phenol + S-adenosyl-L-homocysteine + H(+). It functions in the pathway cofactor biosynthesis; ubiquinone biosynthesis. Its function is as follows. O-methyltransferase that catalyzes the 2 O-methylation steps in the ubiquinone biosynthetic pathway. This is Ubiquinone biosynthesis O-methyltransferase from Dechloromonas aromatica (strain RCB).